The sequence spans 662 residues: Carboxysome assembly protein CsoS2 (662 aa).

The N-terminal domain stretch occupies residues Met-1 to Gln-227. Disordered regions lie at residues Met-1–Gly-258, Asn-277–Ala-322, and Pro-342–Cys-419. The stretch at Ser-8–Thr-27 is one N-repeat 1 repeat. Low complexity-rich tracts occupy residues Ala-28 to Ser-57 and Ser-64 to Ala-76. An N-repeat 2 repeat occupies Arg-58–Ala-72. Over residues Arg-120–Thr-135 the composition is skewed to basic and acidic residues. Polar residues predominate over residues Val-141–Leu-150. Residues Ser-147–Ala-168 form an N-repeat 3 repeat. Low complexity-rich tracts occupy residues Lys-161 to Lys-170, Gly-237 to Gln-247, and Val-289 to Val-300. 5 M-repeat repeats span residues Lys-228 to Cys-278, Lys-288 to Cys-338, Lys-388 to Cys-436, Lys-446 to Phe-491, and Val-496 to Cys-550. Residues Lys-228 to Gly-559 are middle region. The segment covering Pro-391 to Gln-404 has biased composition (polar residues). The interval Glu-560–Pro-631 is C-terminal domain. One copy of the C-repeat 1 repeat lies at Pro-564 to Pro-572. 2 disordered regions span residues Lys-588–Trp-607 and Ala-619–Ala-662. A C-terminal peptide region spans residues Val-632–Ala-662. The segment covering Ile-641–Thr-650 has biased composition (polar residues).

Belongs to the CsoS2 family. Interacts via its N-terminal repeats with RuBisCO. Interacts with the major shell protein CsoS1. Unlike H.neapolitanus and predictions for P.marinus strain MIT 9313, this protein is not thought to have ribosomal frameshifting.

The protein resides in the carboxysome. In terms of biological role, required for alpha-carboxysome (Cb) assembly, mediates interaction between RuBisCO and the Cb shell. The protein is probably intrinsically disordered. The C-terminal repeats act as the encapsulation signal to target proteins to the Cb; they are necessary and sufficient to target both CsoS2 and foreign proteins to the Cb. The N-terminal repeats of this protein bind simultaneously to both subunits of RuBisCO. Probably also interacts with the major shell proteins (CsoS1); that interaction would increase the local concentration of CsoS2 so that it can condense RuBisCO and full carboxysomes can be formed. This chain is Carboxysome assembly protein CsoS2, found in Hydrogenovibrio crunogenus (strain DSM 25203 / XCL-2) (Thiomicrospira crunogena).